A 433-amino-acid chain; its full sequence is Probable non-inhibitory serpin-Z5 (433 aa).

Residues 1-12 show a composition bias toward basic and acidic residues; the sequence is MEPKEKKQKLDT. A disordered region spans residues 1 to 43; the sequence is MEPKEKKQKLDTSEVASPSLSKTHLKKKKTKKQKIRKSQEITS. Residues 23 to 36 are compositionally biased toward basic residues; that stretch reads THLKKKKTKKQKIR. Residues 380–404 form an RCL region; sequence GTEAVTFTAFRSAYLGCALVKPIDF.

The protein belongs to the serpin family. In terms of tissue distribution, weakly expressed during seedling development.

The polypeptide is Probable non-inhibitory serpin-Z5 (Arabidopsis thaliana (Mouse-ear cress)).